The primary structure comprises 218 residues: MARKWNGRAVARALVLATLWLAVSGRPLAQQSQSVSDEDPLFLYGWGKITRLQYLYSAGPYVSNCFLRIRSDGSVDCEEDQNERNLLEFRAVALKTIAIKDVSSVRYLCMSADGKIYGLIRYSEEDCTFREEMDCLGYNQYRSMKHHLHIIFIQAKPREQLQDQKPSNFIPVFHRSFFETGDQLRSKMFSLPLESDSMDPFRMVEDVDHLVKSPSFQK.

An N-terminal signal peptide occupies residues 1 to 25; that stretch reads MARKWNGRAVARALVLATLWLAVSG.

It belongs to the heparin-binding growth factors family. As to quaternary structure, interacts with MALRD1. As to expression, expressed in the developing brain.

It localises to the secreted. Involved in the suppression of bile acid biosynthesis through down-regulation of CYP7A1 expression. The sequence is that of Fibroblast growth factor 15 (Fgf15) from Mus musculus (Mouse).